A 341-amino-acid polypeptide reads, in one-letter code: Heat-inducible transcription repressor HrcA (341 aa).

Belongs to the HrcA family.

In terms of biological role, negative regulator of class I heat shock genes (grpE-dnaK-dnaJ and groELS operons). Prevents heat-shock induction of these operons. The chain is Heat-inducible transcription repressor HrcA from Symbiobacterium thermophilum (strain DSM 24528 / JCM 14929 / IAM 14863 / T).